The primary structure comprises 266 residues: HLA class II histocompatibility antigen, DR beta 3 chain (266 aa).

Positions methionine 1–alanine 29 are cleaved as a signal peptide. Positions glycine 30–valine 124 are beta-1. Residues glycine 30–lysine 227 are Extracellular-facing. 2 disulfide bridges follow: cysteine 44-cysteine 108 and cysteine 146-cysteine 202. Residue asparagine 48 is glycosylated (N-linked (GlcNAc...) asparagine). The beta-2 stretch occupies residues histidine 125–lysine 227. The region spanning proline 126–threonine 214 is the Ig-like C1-type domain. The chain crosses the membrane as a helical span at residues methionine 228–isoleucine 248. Residues tyrosine 249 to serine 266 are Cytoplasmic-facing.

This sequence belongs to the MHC class II family. As to quaternary structure, heterotrimer that consists of an alpha chain HLA-DRA, a beta chain HLA-DRB1 and a peptide (peptide-MHCII). Newly synthesized alpha and beta chains forms a heterodimer (MHCII) that associates with the CD74/invariant chain (Ii) in the endoplasmic reticulum (ER). Ii is a trimer composed of three subunits and each subunit interacts with one MHCII dimer, blocking the peptide-binding cleft. As a result, MHCII molecules cannot bind peptides present in the ER. The complex of MHCII and CD74/Ii is transported in vesicles from ER to Golgi to lysosomes, where it encounters antigenic peptides generated via proteolysis of endocytosed antigens. MHCII dimers are dissociated from CD74/Ii by the combined action of proteolysis and HLA-DM. Lysosomal enzymes such as cathepsin, degrade CD74/Ii leaving a 24 amino acid remnant called class II-associated Ii or CLIP. Interacts (via the peptide binding cleft) with CLIP; this interaction inhibits antigen peptide binding before entry in the endosomal compartment. The displacement of CLIP and replacement by a high affinity peptide in lysosomes is performed by HLA-DM heterodimer. HLA-DM catalyzes CLIP dissociation from MHCII, stabilizes empty MHCII and mediates the selection of high affinity peptides. Interacts with HLA-DM heterodimer; this interaction is direct. Interacts with TCR (via CDR3). Interacts (via beta-2 domain) with CD4 coreceptor (via Ig-like V-type domain); this interaction is of exceptionally low affinity yet necessary for optimal recognition of antigenic peptides. In terms of processing, ubiquitinated by MARCHF1 and MARCHF8 at Lys-254 leading to sorting into the endosome system and down-regulation of MHC class II. In terms of tissue distribution, expressed in professional APCs: monocyte/macrophages, dendritic cells and B cells (at protein level).

It localises to the cell membrane. The protein localises to the endoplasmic reticulum membrane. It is found in the lysosome membrane. Its subcellular location is the late endosome membrane. The protein resides in the autolysosome membrane. In terms of biological role, a beta chain of antigen-presenting major histocompatibility complex class II (MHCII) molecule. In complex with the alpha chain HLA-DRA, displays antigenic peptides on professional antigen presenting cells (APCs) for recognition by alpha-beta T cell receptor (TCR) on HLA-DRB3-restricted CD4-positive T cells. This guides antigen-specific T-helper effector functions, both antibody-mediated immune response and macrophage activation, to ultimately eliminate the infectious agents and transformed cells. Typically presents extracellular peptide antigens of 10 to 30 amino acids that arise from proteolysis of endocytosed antigens in lysosomes. In the tumor microenvironment, presents antigenic peptides that are primarily generated in tumor-resident APCs likely via phagocytosis of apoptotic tumor cells or macropinocytosis of secreted tumor proteins. Presents peptides derived from intracellular proteins that are trapped in autolysosomes after macroautophagy, a mechanism especially relevant for T cell selection in the thymus and central immune tolerance. The selection of the immunodominant epitopes follows two processing modes: 'bind first, cut/trim later' for pathogen-derived antigenic peptides and 'cut first, bind later' for autoantigens/self-peptides. The anchor residue at position 1 of the peptide N-terminus, usually a large hydrophobic residue, is essential for high affinity interaction with MHCII molecules. Functionally, ALLELE DRB3*01:01: Exclusively presents several immunogenic epitopes derived from C.tetani neurotoxin tetX, playing a significant role in immune recognition and long-term protection. Presents viral epitopes derived from HHV-6B U11, TRX2/U56 and U85 antigens to polyfunctional CD4-positive T cells with cytotoxic activity implicated in control of HHV-6B infection. Its function is as follows. ALLELE DRB3*02:02 Exclusively presents several immunogenic epitopes derived from C.tetani neurotoxin tetX, playing a significant role in immune recognition and long-term protection. Upon EBV infection, presents to CD4-positive T cells latent antigen EBNA2 (PRSPTVFYNIPPMPLPPSQL) and lytic antigen BZLF1 (LTAYHVSTAPTGSWF) peptides, driving oligoclonal expansion and selection of virus-specific memory T cell subsets with cytotoxic potential to directly eliminate virus-infected B cells. Presents viral epitopes derived from HHV-6B U11, gB/U39 and gH/U48 antigens to polyfunctional CD4-positive T cells with cytotoxic activity implicated in control of HHV-6B infection. Plays a minor role in CD4-positive T cell immune response against Dengue virus by presenting conserved peptides from capsid and non-structural NS3 proteins. Displays peptides derived from IAV matrix protein M, implying a role in protection against IAV infection. In the context of tumor immunesurveillance, may present to T-helper 1 cells an immunogenic epitope derived from tumor-associated antigen WT1 (KRYFKLSHLQMHSRKH), likely providing for effective antitumor immunity in a wide range of solid and hematological malignancies. Presents to Vbeta2-positive T-helper 1 cells specifically an immunodominant peptide derived from tumor antigen CTAG1A/NY-ESO-1(PGVLLKEFTVSGNILTIRLTAADHR) and confers protective memory response. In metastatic epithelial tumors, presents to intratumoral CD4-positive T cells a TP53 neoantigen (HYNYMCNSSCMGSMNRRPILTIITL) carrying G245S hotspot driver mutation and may mediate tumor regression. ALLELE DRB3*03:01: Presents a series of conserved peptides derived from the M.tuberculosis PPE family of proteins, in particular PPE29 and PPE33, known to be highly immunogenic. Presents immunogenic epitopes derived from C.tetani neurotoxin tetX, playing a role in immune recognition and long-term protection. Displays immunodominant viral peptides from HCV non-structural protein NS2, as part of a broad range T-helper response to resolve infection. The chain is HLA class II histocompatibility antigen, DR beta 3 chain (HLA-DRB3) from Homo sapiens (Human).